Reading from the N-terminus, the 162-residue chain is NADH-quinone oxidoreductase subunit I (162 aa).

2 consecutive 4Fe-4S ferredoxin-type domains span residues 53–83 (LRRYPNGEERCIACKLCEAVCPALAITIDSA) and 93–122 (TRYDIDLFKCIFCGFCEESCPVDSIVETHI). [4Fe-4S] cluster contacts are provided by cysteine 63, cysteine 66, cysteine 69, cysteine 73, cysteine 102, cysteine 105, cysteine 108, and cysteine 112.

This sequence belongs to the complex I 23 kDa subunit family. As to quaternary structure, NDH-1 is composed of 14 different subunits. Subunits NuoA, H, J, K, L, M, N constitute the membrane sector of the complex. Requires [4Fe-4S] cluster as cofactor.

It is found in the cell inner membrane. It carries out the reaction a quinone + NADH + 5 H(+)(in) = a quinol + NAD(+) + 4 H(+)(out). Functionally, NDH-1 shuttles electrons from NADH, via FMN and iron-sulfur (Fe-S) centers, to quinones in the respiratory chain. The immediate electron acceptor for the enzyme in this species is believed to be ubiquinone. Couples the redox reaction to proton translocation (for every two electrons transferred, four hydrogen ions are translocated across the cytoplasmic membrane), and thus conserves the redox energy in a proton gradient. The polypeptide is NADH-quinone oxidoreductase subunit I (Xanthomonas oryzae pv. oryzae (strain MAFF 311018)).